The primary structure comprises 459 residues: Cysteine--tRNA ligase (459 aa).

Residue Cys28 coordinates Zn(2+). Positions 30–40 (VTIYDLCHIGH) match the 'HIGH' region motif. Zn(2+)-binding residues include Cys209, His234, and Glu238. The 'KMSKS' region signature appears at 266–270 (KMSKS). Lys269 is a binding site for ATP.

This sequence belongs to the class-I aminoacyl-tRNA synthetase family. As to quaternary structure, monomer. The cofactor is Zn(2+).

Its subcellular location is the cytoplasm. The enzyme catalyses tRNA(Cys) + L-cysteine + ATP = L-cysteinyl-tRNA(Cys) + AMP + diphosphate. This Shewanella baltica (strain OS195) protein is Cysteine--tRNA ligase.